A 216-amino-acid polypeptide reads, in one-letter code: Phosphoserine phosphatase (216 aa).

The Nucleophile role is filled by Asp10. 2 residues coordinate Mg(2+): Asp10 and Asp12. The active-site Proton donor is the Asp12. Substrate contacts are provided by residues Glu19, Arg55, 98 to 99 (SG), and Lys143. Asp166 contacts Mg(2+). Asn169 contributes to the substrate binding site.

Belongs to the HAD-like hydrolase superfamily. SerB family. Mg(2+) serves as cofactor.

It catalyses the reaction O-phospho-L-serine + H2O = L-serine + phosphate. It carries out the reaction O-phospho-D-serine + H2O = D-serine + phosphate. Its pathway is amino-acid biosynthesis; L-serine biosynthesis; L-serine from 3-phospho-D-glycerate: step 3/3. The chain is Phosphoserine phosphatase from Lactococcus lactis subsp. lactis (strain IL1403) (Streptococcus lactis).